Reading from the N-terminus, the 99-residue chain is Ubiquitin-related modifier 1 (99 aa).

A 1-thioglycine modification is found at Gly99. Residue Gly99 forms a Glycyl lysine isopeptide (Gly-Lys) (interchain with K-? in acceptor proteins) linkage.

Belongs to the URM1 family. Homodimer; homodimerization may provide an autoprotection to the highly active C-terminal residue before attacking its substrates. Interacts with NCS2 and NCS6. Forms a conjugate with the target protein AHP1. In terms of processing, C-terminal thiocarboxylation occurs in 2 steps, it is first acyl-adenylated (-COAMP) via the hesA/moeB/thiF part of UBA4, then thiocarboxylated (-COSH) via the rhodanese domain of UBA4.

It is found in the cytoplasm. It localises to the nucleus. The protein operates within tRNA modification; 5-methoxycarbonylmethyl-2-thiouridine-tRNA biosynthesis. Acts as a sulfur carrier required for 2-thiolation of mcm(5)S(2)U at tRNA wobble positions of cytosolic tRNA(Lys), tRNA(Glu) and tRNA(Gln). Serves as sulfur donor in tRNA 2-thiolation reaction by being thiocarboxylated (-COSH) at its C-terminus by the MOCS3 homolog UBA4. The sulfur is then transferred to tRNA to form 2-thiolation of mcm(5)S(2)U. Prior mcm(5) tRNA modification by the elongator complex is required for 2-thiolation. Also acts as a ubiquitin-like protein (UBL) that is covalently conjugated via an isopeptide bond to lysine residues of target proteins such as AHP1. The thiocarboxylated form serves as substrate for conjugation and oxidative stress specifically induces the formation of UBL-protein conjugates. This chain is Ubiquitin-related modifier 1, found in Saccharomyces cerevisiae (strain RM11-1a) (Baker's yeast).